The primary structure comprises 371 residues: Putative glutamate--cysteine ligase 2 (371 aa).

This sequence belongs to the glutamate--cysteine ligase type 2 family. YbdK subfamily.

The enzyme catalyses L-cysteine + L-glutamate + ATP = gamma-L-glutamyl-L-cysteine + ADP + phosphate + H(+). Its function is as follows. ATP-dependent carboxylate-amine ligase which exhibits weak glutamate--cysteine ligase activity. The sequence is that of Putative glutamate--cysteine ligase 2 from Paraburkholderia phytofirmans (strain DSM 17436 / LMG 22146 / PsJN) (Burkholderia phytofirmans).